Consider the following 505-residue polypeptide: Maturase K (505 aa).

Belongs to the intron maturase 2 family. MatK subfamily.

The protein localises to the plastid. The protein resides in the chloroplast. In terms of biological role, usually encoded in the trnK tRNA gene intron. Probably assists in splicing its own and other chloroplast group II introns. The polypeptide is Maturase K (Gomphrena pulchella (Globe amaranth)).